Consider the following 266-residue polypeptide: Short-chain dehydrogenase/reductase atnB (266 aa).

Residues Ile-13, Asp-57, and Asn-85 each contribute to the NADP(+) site. Residues Ser-147 and Tyr-166 each act as proton donor in the active site. NADP(+)-binding residues include Tyr-166, Lys-170, Val-199, and Thr-201. Lys-170 serves as the catalytic Lowers pKa of active site Tyr.

It belongs to the short-chain dehydrogenases/reductases (SDR) family.

It participates in secondary metabolite biosynthesis; terpenoid biosynthesis. In terms of biological role, short-chain dehydrogenase/reductase; part of the gene cluster that mediates the biosynthesis of the meroterpenoids arthripenoids. The pathway begins with the HR-PKS atnH that catalyzes two chain-extension steps to form a reduced triketide, which then primes the SAT domain in the NR-PKS atnG to initiate three more cycles of extension to give a linear hexaketide corresponding to the polyketide part of arthripenoids. The FAD-dependent monooxygenase atnJ then performs an oxidative decarboxylation at C11 of the atnH/atnG product, via an electrophilic aromatic hydroxylation with concomitant ipso-decarboxylation. The membrane-bound polyprenyl transferase atnF then introduces a farnesyl group before the FAD-dependent monooxygenase atnK functions as the first epoxidase on terminal C12'-C13' olefin, followed by a second epoxidation on C7'-C8' catalyzed by atnA. The terpene cyclase/mutase atnI then initiates the sequential tricyclic ring formation through protonation of the terminal epoxide and catalyzes the regioselective and stereoselective 6/6/6-tricyclic ring formation. The cytochrome P450 monooxygenase atnM is responsible for hydroxylating both C1' and C10'. The next steps may involve ketoreduction and acetyl transfer by the ketoreductase atnB and the acetyltransferase atnC, and lead to the production of arthripenoid B, the final biosynthetic product of the atn cluster. The hydroquinone moiety in arthripenoid B is prone to undergo spontaneous oxidation to afford a benzoquinone compound, a key intermediate for generating structure diversity. For instance, addition of a cysteine followed by ring contraction gives arthripenoid A, tautomerization gives the main product arthripenoid C, addition of a molecular of water or amine affords arthripenoid D or E, respectively, and loss of one water forms arthripenoid F. This Arthrinium sp protein is Short-chain dehydrogenase/reductase atnB.